The chain runs to 300 residues: GTPase Era (300 aa).

In terms of domain architecture, Era-type G spans 8 to 176 (RCGYVAIVGR…ESLIASHLPE (169 aa)). The segment at 16–23 (GRPNVGKS) is G1. GTP is bound at residue 16–23 (GRPNVGKS). A G2 region spans residues 42 to 46 (QTTRH). The tract at residues 63–66 (DTPG) is G3. Residues 63-67 (DTPGM) and 125-128 (NKTD) contribute to the GTP site. A G4 region spans residues 125–128 (NKTD). The G5 stretch occupies residues 155-157 (ISA). The KH type-2 domain occupies 199–283 (VREKIMRQLG…MLNLWVKVKG (85 aa)).

Belongs to the TRAFAC class TrmE-Era-EngA-EngB-Septin-like GTPase superfamily. Era GTPase family. As to quaternary structure, monomer.

Its subcellular location is the cytoplasm. The protein localises to the cell inner membrane. Functionally, an essential GTPase that binds both GDP and GTP, with rapid nucleotide exchange. Plays a role in 16S rRNA processing and 30S ribosomal subunit biogenesis and possibly also in cell cycle regulation and energy metabolism. The polypeptide is GTPase Era (Pseudomonas savastanoi pv. phaseolicola (strain 1448A / Race 6) (Pseudomonas syringae pv. phaseolicola (strain 1448A / Race 6))).